A 137-amino-acid chain; its full sequence is 15.7 kDa heat shock protein, peroxisomal (137 aa).

Residues 15-134 (QEWSRSTALI…SSKVRNVNIT (120 aa)) form the sHSP domain. Positions 135 to 137 (SKL) match the Microbody targeting signal motif.

Belongs to the small heat shock protein (HSP20) family. As to quaternary structure, may form oligomeric structures.

Its subcellular location is the peroxisome. Its function is as follows. Possesses chaperone activity. This chain is 15.7 kDa heat shock protein, peroxisomal (HSP15.7), found in Arabidopsis thaliana (Mouse-ear cress).